Consider the following 275-residue polypeptide: 2,3,4,5-tetrahydropyridine-2,6-dicarboxylate N-succinyltransferase (275 aa).

The substrate site is built by arginine 106 and aspartate 143.

The protein belongs to the transferase hexapeptide repeat family. Homotrimer.

It localises to the cytoplasm. It carries out the reaction (S)-2,3,4,5-tetrahydrodipicolinate + succinyl-CoA + H2O = (S)-2-succinylamino-6-oxoheptanedioate + CoA. It functions in the pathway amino-acid biosynthesis; L-lysine biosynthesis via DAP pathway; LL-2,6-diaminopimelate from (S)-tetrahydrodipicolinate (succinylase route): step 1/3. The sequence is that of 2,3,4,5-tetrahydropyridine-2,6-dicarboxylate N-succinyltransferase from Pelagibacter ubique (strain HTCC1062).